Reading from the N-terminus, the 351-residue chain is Purine permease 3 (351 aa).

Helical transmembrane passes span 4-24 (ALVI…PLIM), 35-55 (IWFS…PLLF), 72-92 (FFLI…LSGF), 108-128 (TAAL…FFMV), 132-152 (FTPF…VLGM), 168-188 (ITGF…LPLV), 207-227 (FQLI…FIAG), 249-269 (VAVF…GLIF), 274-294 (LVSG…AVIF), and 304-324 (GLSL…EIKS). The EamA domain occupies 45–152 (GFPVIFIPLL…LTVGAAVLGM (108 aa)). The segment at 329 to 351 (RRIQQEESQETEQSSLSRPISEC) is disordered.

Belongs to the purine permeases (TC 2.A.7.14) family. In terms of tissue distribution, restricted to pollen.

The protein localises to the membrane. Its function is as follows. May be involved in transport of purine derivatives during pollen germination and tube elongation. The polypeptide is Purine permease 3 (PUP3) (Arabidopsis thaliana (Mouse-ear cress)).